A 633-amino-acid chain; its full sequence is Probable potassium transport system protein Kup 3 (633 aa).

A run of 12 helical transmembrane segments spans residues 24–44 (LVLAALGVVYGDIGTSPLYAF), 61–81 (VLGILSLIVWALTIVVTLKYV), 114–134 (LVLGVIGASLFLGDAIITPAI), 148–168 (PALSNWVVPITLTIIAVLFFV), 180–200 (FGPVTALWFIVLGVSGAIHIF), 222–242 (IGSAIAVLGAVFLAVTGAEAL), 258–278 (WFSLVFPSLLLNYFGQGAFVL), 298–318 (IPMVCLATAATVIASQAVISG), 348–368 (IFMPQVNNLLFIFVAALVLFF), 377–397 (AYGIAVTGEMFITSILLFIVM), 405–425 (LTAALAVIVPITLIDAGFLAA), and 427–447 (IAKFAEGGWVPVAVASTMALI).

Belongs to the HAK/KUP transporter (TC 2.A.72) family.

The protein resides in the cell inner membrane. The catalysed reaction is K(+)(in) + H(+)(in) = K(+)(out) + H(+)(out). Its function is as follows. Transport of potassium into the cell. Likely operates as a K(+):H(+) symporter. This chain is Probable potassium transport system protein Kup 3, found in Rhizobium johnstonii (strain DSM 114642 / LMG 32736 / 3841) (Rhizobium leguminosarum bv. viciae).